A 582-amino-acid polypeptide reads, in one-letter code: Probable DNA ligase (582 aa).

Glutamate 243 is an ATP binding site. Lysine 245 acts as the N6-AMP-lysine intermediate in catalysis. The ATP site is built by arginine 250, arginine 265, glutamate 295, phenylalanine 335, arginine 410, and lysine 416.

Belongs to the ATP-dependent DNA ligase family. It depends on Mg(2+) as a cofactor.

The catalysed reaction is ATP + (deoxyribonucleotide)n-3'-hydroxyl + 5'-phospho-(deoxyribonucleotide)m = (deoxyribonucleotide)n+m + AMP + diphosphate.. In terms of biological role, DNA ligase that seals nicks in double-stranded DNA during DNA replication, DNA recombination and DNA repair. The protein is Probable DNA ligase of Dictyoglomus turgidum (strain DSM 6724 / Z-1310).